The primary structure comprises 292 residues: Cytochrome c1, heme protein, mitochondrial (292 aa).

A mitochondrion-targeting transit peptide spans 1-46; the sequence is MFRSFSTAAKQAVKGTYVQRAIVGGAAVVGIGASTMLYADSLTADA. At 47–253 the chain is on the mitochondrial intermembrane side; that stretch reads MTAAEHGLHA…SEPEHDERKR (207 aa). Residues 73–226 enclose the Cytochrome c domain; the sequence is SSIRRGYQVY…DLVEYEDGTP (154 aa). Residues cysteine 86, cysteine 89, and histidine 90 each contribute to the heme c site. Residues 117 to 137 form a disordered region; it reads FEYDDEPDDQGNPKKRPGKLA. Methionine 210 contributes to the heme c binding site. The helical transmembrane segment at 254-272 threads the bilayer; the sequence is LGLKAMIVLSSLYLLSVWV. Residues 273–292 are Mitochondrial matrix-facing; the sequence is KKFKWASIKSRKIVFNPPKK.

It belongs to the cytochrome c family. In terms of assembly, component of the ubiquinol-cytochrome c oxidoreductase (cytochrome b-c1 complex, complex III, CIII), a multisubunit enzyme composed of 3 respiratory subunits cytochrome b, cytochrome c1 and Rieske protein, 2 core protein subunits, and additional low-molecular weight protein subunits. The complex exists as an obligatory dimer and forms supercomplexes (SCs) in the inner mitochondrial membrane with cytochrome c oxidase (complex IV, CIV). The cofactor is heme c.

It localises to the mitochondrion inner membrane. The catalysed reaction is a quinol + 2 Fe(III)-[cytochrome c](out) = a quinone + 2 Fe(II)-[cytochrome c](out) + 2 H(+)(out). In terms of biological role, component of the ubiquinol-cytochrome c oxidoreductase, a multisubunit transmembrane complex that is part of the mitochondrial electron transport chain which drives oxidative phosphorylation. The respiratory chain contains 3 multisubunit complexes succinate dehydrogenase (complex II, CII), ubiquinol-cytochrome c oxidoreductase (cytochrome b-c1 complex, complex III, CIII) and cytochrome c oxidase (complex IV, CIV), that cooperate to transfer electrons derived from NADH and succinate to molecular oxygen, creating an electrochemical gradient over the inner membrane that drives transmembrane transport and the ATP synthase. The cytochrome b-c1 complex catalyzes electron transfer from ubiquinol to cytochrome c, linking this redox reaction to translocation of protons across the mitochondrial inner membrane, with protons being carried across the membrane as hydrogens on the quinol. In the process called Q cycle, 2 protons are consumed from the matrix, 4 protons are released into the intermembrane space and 2 electrons are passed to cytochrome c. Cytochrome c1 is a catalytic core subunit containing a c-type heme. It transfers electrons from the [2Fe-2S] iron-sulfur cluster of the Rieske protein to cytochrome c. In Kluyveromyces lactis (strain ATCC 8585 / CBS 2359 / DSM 70799 / NBRC 1267 / NRRL Y-1140 / WM37) (Yeast), this protein is Cytochrome c1, heme protein, mitochondrial (CYT1).